We begin with the raw amino-acid sequence, 337 residues long: Ferrochelatase (337 aa).

Positions 189 and 293 each coordinate Fe cation.

Belongs to the ferrochelatase family.

It is found in the cytoplasm. It carries out the reaction heme b + 2 H(+) = protoporphyrin IX + Fe(2+). It participates in porphyrin-containing compound metabolism; protoheme biosynthesis; protoheme from protoporphyrin-IX: step 1/1. Catalyzes the ferrous insertion into protoporphyrin IX. The chain is Ferrochelatase from Pseudomonas putida (strain W619).